A 510-amino-acid chain; its full sequence is MKKVIIRKTEEIKNWRRNINSDINFIPTMGNLHNGHKTLISTAKNANSNVNLVSIFVNPLQFDNKSDLENYPKTIDNDIKISFENGADVIFIPSTEEIYPSDNKNITFLKAPLELSSSLCGLNRIGHFDGVCTVVYKLLNLIKPKNLYLGEKDWQQLLILKNLVLTKKLDVAIKSIPTQRDFDGIPLSSRNVHLSNNERKLIRFFSHELLVAKENFQQEKKINLKEIIQKLSAQKISIEYLEHLHPYTLQESKVEDNISILAGAIRCGETRLIDHVFLMKRSPIIAIDGPAGSGKSTVTQLIAKKLKLLYLDTGAMYRALSWLLIKENIDYKEEKKLQNILKDISIVFKSNTNSQQDVFINNYCVTEEIRSQEISSIVSKISSIKEVREFLVEEQRKIGESGGLVAEGRDIGTTVFPDAELKIFLTASIDERAKRRKSDKKSKDSQEIDLHKLKELIKKRDFEDSNREISPLIKANDAIEIITDGCSINEVVDKIIDLYNDKIPKETQIR.

Residues 1 to 276 (MKKVIIRKTE…CGETRLIDHV (276 aa)) form a pantoate--beta-alanine ligase region. 29–36 (MGNLHNGH) provides a ligand contact to ATP. Catalysis depends on H36, which acts as the Proton donor. Position 61 (Q61) interacts with (R)-pantoate. Q61 lines the beta-alanine pocket. An ATP-binding site is contributed by 150–153 (GEKD). Residue Q156 participates in (R)-pantoate binding. 187–190 (LSSR) serves as a coordination point for ATP. Residues 277-510 (FLMKRSPIIA…DKIPKETQIR (234 aa)) form a cytidylate kinase region.

In the N-terminal section; belongs to the pantothenate synthetase family. The protein in the C-terminal section; belongs to the cytidylate kinase family. Type 1 subfamily.

It localises to the cytoplasm. The enzyme catalyses (R)-pantoate + beta-alanine + ATP = (R)-pantothenate + AMP + diphosphate + H(+). It catalyses the reaction CMP + ATP = CDP + ADP. The catalysed reaction is dCMP + ATP = dCDP + ADP. The protein operates within cofactor biosynthesis; (R)-pantothenate biosynthesis; (R)-pantothenate from (R)-pantoate and beta-alanine: step 1/1. In terms of biological role, catalyzes the condensation of pantoate with beta-alanine in an ATP-dependent reaction via a pantoyl-adenylate intermediate. Functionally, catalyzes the transfer of a phosphate group from ATP to either CMP or dCMP to form CDP or dCDP and ADP, respectively. This chain is Bifunctional pantoate ligase/cytidylate kinase, found in Prochlorococcus marinus (strain MIT 9312).